We begin with the raw amino-acid sequence, 561 residues long: Oxygen-dependent choline dehydrogenase (561 aa).

6–35 (DYIIIGAGSAGNVLATRLTEDADVSVLLLE) serves as a coordination point for FAD. His-475 (proton acceptor) is an active-site residue.

Belongs to the GMC oxidoreductase family. FAD is required as a cofactor.

The enzyme catalyses choline + A = betaine aldehyde + AH2. It catalyses the reaction betaine aldehyde + NAD(+) + H2O = glycine betaine + NADH + 2 H(+). It participates in amine and polyamine biosynthesis; betaine biosynthesis via choline pathway; betaine aldehyde from choline (cytochrome c reductase route): step 1/1. Involved in the biosynthesis of the osmoprotectant glycine betaine. Catalyzes the oxidation of choline to betaine aldehyde and betaine aldehyde to glycine betaine at the same rate. The sequence is that of Oxygen-dependent choline dehydrogenase from Pseudomonas aeruginosa (strain UCBPP-PA14).